A 417-amino-acid chain; its full sequence is Peptidyl-Asp metalloendopeptidase (417 aa).

An N-terminal signal peptide occupies residues 1–23; it reads MKSKSMCTTVGLIAMCLAGSAAA. Histidine 331 contributes to the Zn(2+) binding site. Glutamate 332 is a catalytic residue. Zn(2+)-binding residues include histidine 335 and histidine 341.

It belongs to the peptidase M72 family. Requires Zn(2+) as cofactor.

It carries out the reaction Cleavage of Xaa-|-Asp, Xaa-|-Glu and Xaa-|-cysteic acid bonds.. In terms of biological role, metalloprotease, specifically cleaves on the N-terminal side of aspartyl, glutamyl and cysteic acid residues. This is Peptidyl-Asp metalloendopeptidase from Xanthomonas campestris pv. campestris (strain ATCC 33913 / DSM 3586 / NCPPB 528 / LMG 568 / P 25).